The primary structure comprises 320 residues: uncharacterized protein (320 aa).

7 consecutive transmembrane segments (helical) span residues 24–44 (FEFSVHGTCVVFNLFLCIFFI), 65–85 (FVLSLPLFFLQFYLVVFLWSL), 105–125 (TTSCAQVLPLAVAIYRYFIVV), 132–152 (SWFVVVVHSIISFIFFVIAIL), 179–199 (ISLTLGLNLFAVFINVAIYTF), 226–246 (MIPILVSIPLLVGSFDFYFGY), and 253–275 (TSRWYATTFLSPLLTPISSMLSL).

It localises to the membrane. This is an uncharacterized protein from Caenorhabditis elegans.